The primary structure comprises 335 residues: Tetraacyldisaccharide 4'-kinase (335 aa).

58–65 contacts ATP; the sequence is TVGGVGKT.

Belongs to the LpxK family.

It carries out the reaction a lipid A disaccharide + ATP = a lipid IVA + ADP + H(+). The protein operates within glycolipid biosynthesis; lipid IV(A) biosynthesis; lipid IV(A) from (3R)-3-hydroxytetradecanoyl-[acyl-carrier-protein] and UDP-N-acetyl-alpha-D-glucosamine: step 6/6. Transfers the gamma-phosphate of ATP to the 4'-position of a tetraacyldisaccharide 1-phosphate intermediate (termed DS-1-P) to form tetraacyldisaccharide 1,4'-bis-phosphate (lipid IVA). In Caulobacter sp. (strain K31), this protein is Tetraacyldisaccharide 4'-kinase.